The primary structure comprises 346 residues: Elongation factor Ts (346 aa).

An involved in Mg(2+) ion dislocation from EF-Tu region spans residues 80-83 (TDFV).

The protein belongs to the EF-Ts family.

The protein resides in the cytoplasm. Associates with the EF-Tu.GDP complex and induces the exchange of GDP to GTP. It remains bound to the aminoacyl-tRNA.EF-Tu.GTP complex up to the GTP hydrolysis stage on the ribosome. This chain is Elongation factor Ts, found in Streptococcus pyogenes serotype M1.